The sequence spans 353 residues: 4-hydroxy-3-methylbut-2-en-1-yl diphosphate synthase (flavodoxin) (353 aa).

Residues Cys-263, Cys-266, Cys-298, and Glu-305 each coordinate [4Fe-4S] cluster.

Belongs to the IspG family. Requires [4Fe-4S] cluster as cofactor.

It carries out the reaction (2E)-4-hydroxy-3-methylbut-2-enyl diphosphate + oxidized [flavodoxin] + H2O + 2 H(+) = 2-C-methyl-D-erythritol 2,4-cyclic diphosphate + reduced [flavodoxin]. Its pathway is isoprenoid biosynthesis; isopentenyl diphosphate biosynthesis via DXP pathway; isopentenyl diphosphate from 1-deoxy-D-xylulose 5-phosphate: step 5/6. Its function is as follows. Converts 2C-methyl-D-erythritol 2,4-cyclodiphosphate (ME-2,4cPP) into 1-hydroxy-2-methyl-2-(E)-butenyl 4-diphosphate. This chain is 4-hydroxy-3-methylbut-2-en-1-yl diphosphate synthase (flavodoxin), found in Geobacter sulfurreducens (strain ATCC 51573 / DSM 12127 / PCA).